The sequence spans 94 residues: MATDLNIDHVANLARLALTPEEKATFAQQLGDVLHHIEQLAKVDVAGVEPTAHAFAVTNVWADDAPQPGLSVEAALKNAPAQREHMVVVPKVVE.

The protein belongs to the GatC family. As to quaternary structure, heterotrimer of A, B and C subunits.

The catalysed reaction is L-glutamyl-tRNA(Gln) + L-glutamine + ATP + H2O = L-glutaminyl-tRNA(Gln) + L-glutamate + ADP + phosphate + H(+). It carries out the reaction L-aspartyl-tRNA(Asn) + L-glutamine + ATP + H2O = L-asparaginyl-tRNA(Asn) + L-glutamate + ADP + phosphate + 2 H(+). Allows the formation of correctly charged Asn-tRNA(Asn) or Gln-tRNA(Gln) through the transamidation of misacylated Asp-tRNA(Asn) or Glu-tRNA(Gln) in organisms which lack either or both of asparaginyl-tRNA or glutaminyl-tRNA synthetases. The reaction takes place in the presence of glutamine and ATP through an activated phospho-Asp-tRNA(Asn) or phospho-Glu-tRNA(Gln). This Opitutus terrae (strain DSM 11246 / JCM 15787 / PB90-1) protein is Aspartyl/glutamyl-tRNA(Asn/Gln) amidotransferase subunit C.